A 220-amino-acid chain; its full sequence is Protein-L-isoaspartate O-methyltransferase (220 aa).

The active site involves Ser69.

The protein belongs to the methyltransferase superfamily. L-isoaspartyl/D-aspartyl protein methyltransferase family.

It localises to the cytoplasm. The catalysed reaction is [protein]-L-isoaspartate + S-adenosyl-L-methionine = [protein]-L-isoaspartate alpha-methyl ester + S-adenosyl-L-homocysteine. Catalyzes the methyl esterification of L-isoaspartyl residues in peptides and proteins that result from spontaneous decomposition of normal L-aspartyl and L-asparaginyl residues. It plays a role in the repair and/or degradation of damaged proteins. The chain is Protein-L-isoaspartate O-methyltransferase from Alcanivorax borkumensis (strain ATCC 700651 / DSM 11573 / NCIMB 13689 / SK2).